Consider the following 259-residue polypeptide: Factor V activator (259 aa).

The signal sequence occupies residues 1–18; that stretch reads MVLIRVLANLLVLQLSYA. The propeptide occupies 19-24; that stretch reads QKSSEL. Residues 25 to 251 enclose the Peptidase S1 domain; it reads VVGGDECDIN…YTDWIQSIIA (227 aa). Intrachain disulfides connect C31–C165, C52–C68, C100–C258, C144–C212, C176–C191, and C202–C227. Active-site charge relay system residues include H67 and D112. The Charge relay system role is filled by S206. Residue N253 is glycosylated (N-linked (GlcNAc...) asparagine).

Belongs to the peptidase S1 family. Snake venom subfamily. Monomer. N-glycosylated. Contains 4.4% of hexoses, 4.4% of hexosamines and 3.1% of sialic acids. Expressed by the venom gland.

It localises to the secreted. It catalyses the reaction Fully activates human clotting factor V by a single cleavage at the 1545-Trp-Tyr-Leu-Arg-|-Ser-Asn-Asn-Gly-1552 bond. Cattle, but not rabbit, factor V is cleaved, and no other proteins of the clotting system are attacked. Esterase activity is observed on Bz-Arg-OEt and Tos-Arg-OMe, and amidase activity on Phe-pipecolyl-Arg-NHPhNO2.. With respect to regulation, inhibited by D-Phe-Pro-Arg-chloromethyl ketone (FPRCK) (98%), PMSF (93%), benzamidine (67%), and diisopropylfluorophosphate (DFP). Is not inhibited by BPTI, antithrombin and EDTA. Its function is as follows. Venom serine protease that converts factor V (F5) to the active form Va in the presence of calcium ions and phospholipids. It cleaves the Arg(1545)-Ser(1546) linkage in the human factor V molecule. Has hydrolytic activities against BAEE (1.2 U/mg), TAME, and Pro-Phe-Arg-MCA (4.9 U/mg). Shows coagulant activity. This chain is Factor V activator, found in Macrovipera lebetinus (Levantine viper).